Reading from the N-terminus, the 360-residue chain is Phenylalanine--tRNA ligase alpha subunit (360 aa).

Residue Glu-260 participates in Mg(2+) binding.

It belongs to the class-II aminoacyl-tRNA synthetase family. Phe-tRNA synthetase alpha subunit type 1 subfamily. In terms of assembly, tetramer of two alpha and two beta subunits. Mg(2+) is required as a cofactor.

The protein resides in the cytoplasm. It carries out the reaction tRNA(Phe) + L-phenylalanine + ATP = L-phenylalanyl-tRNA(Phe) + AMP + diphosphate + H(+). This Methylocella silvestris (strain DSM 15510 / CIP 108128 / LMG 27833 / NCIMB 13906 / BL2) protein is Phenylalanine--tRNA ligase alpha subunit.